Reading from the N-terminus, the 142-residue chain is Photosystem II extrinsic protein U (142 aa).

The N-terminal stretch at 1–29 (MKGLVRLLTVFSLLLGCWGWLGTTQIAQA) is a signal peptide.

The protein belongs to the PsbU family. In terms of assembly, PSII is composed of 1 copy each of membrane proteins PsbA, PsbB, PsbC, PsbD, PsbE, PsbF, PsbH, PsbI, PsbJ, PsbK, PsbL, PsbM, PsbT, PsbX, PsbY, PsbZ, Psb30/Ycf12, peripheral proteins PsbO, CyanoQ (PsbQ), PsbU, PsbV and a large number of cofactors. It forms dimeric complexes.

The protein localises to the cellular thylakoid membrane. One of the extrinsic, lumenal subunits of photosystem II (PSII). PSII is a light-driven water plastoquinone oxidoreductase, using light energy to abstract electrons from H(2)O, generating a proton gradient subsequently used for ATP formation. The extrinsic proteins stabilize the structure of photosystem II oxygen-evolving complex (OEC), the ion environment of oxygen evolution and protect the OEC against heat-induced inactivation. In Trichormus variabilis (strain ATCC 29413 / PCC 7937) (Anabaena variabilis), this protein is Photosystem II extrinsic protein U.